The primary structure comprises 444 residues: Nuclear distribution protein nudF (444 aa).

Positions 9-41 (QAEALHKAMLAYLSVINAPQTAETLREELHFDE) constitute a LisH domain. A coiled-coil region spans residues 60 to 88 (TGIARLQRRINDLEAEVRSLQAELEASPS). The tract at residues 83 to 107 (LEASPSAARAKNQDPTNWLPKPSST) is disordered. 7 WD repeats span residues 112–153 (SHRD…RTLK), 155–195 (HIRG…ANIR), 199–239 (GHDH…CVKV), 243–282 (ATES…PKAA), 285–345 (GHEN…IKTL), 347–386 (GHDN…RLVK), and 391–437 (AHEH…GCAD).

Belongs to the WD repeat LIS1/nudF family. Interacts with dynein. Self-associates. Interacts with bnfA, nudC and nudE.

The protein localises to the cytoplasm. The protein resides in the cytoskeleton. Its subcellular location is the spindle pole. Positively regulates the activity of the minus-end directed microtubule motor protein dynein. May enhance dynein-mediated microtubule sliding by targeting dynein to the microtubule plus end. Required for nuclear migration during vegetative growth as well as development. Required for retrograde early endosome (EE) transport from the hyphal tip. Required for localization of dynein to the mitotic spindle poles. Recruits additional proteins to the dynein complex at SPBs. This chain is Nuclear distribution protein nudF, found in Emericella nidulans (strain FGSC A4 / ATCC 38163 / CBS 112.46 / NRRL 194 / M139) (Aspergillus nidulans).